A 629-amino-acid polypeptide reads, in one-letter code: Putative polypeptide N-acetylgalactosaminyltransferase 10 (629 aa).

Topologically, residues 1–12 (MGLSRYLSRRHH) are cytoplasmic. The chain crosses the membrane as a helical; Signal-anchor for type II membrane protein span at residues 13–33 (WVIQYCALLLFLYFIYSYVAV). The Lumenal portion of the chain corresponds to 34 to 629 (SNDAPRLNEE…RQANEHKELE (596 aa)). N143 and N177 each carry an N-linked (GlcNAc...) asparagine glycan. 5 cysteine pairs are disulfide-bonded: C154/C385, C376/C454, C493/C510, C539/C556, and C582/C598. Positions 163 to 275 (LPTVSVIFPF…YNWLPPLLDP (113 aa)) are catalytic subdomain A. The substrate site is built by D204 and R236. 2 residues coordinate Mn(2+): D259 and H261. The interval 331-393 (PFDSPVMAGG…PCSRVAHIYR (63 aa)) is catalytic subdomain B. W362 lines the substrate pocket. H390 lines the Mn(2+) pocket. Position 393 (R393) interacts with substrate. Residues 393-406 (RCKYAPFKNAGMGD) are flexible loop. Positions 526–629 (TRWHDIRPKG…RQANEHKELE (104 aa)) constitute a Ricin B-type lectin domain.

This sequence belongs to the glycosyltransferase 2 family. GalNAc-T subfamily. It depends on Mn(2+) as a cofactor.

It localises to the golgi apparatus membrane. It catalyses the reaction L-seryl-[protein] + UDP-N-acetyl-alpha-D-galactosamine = a 3-O-[N-acetyl-alpha-D-galactosaminyl]-L-seryl-[protein] + UDP + H(+). The enzyme catalyses L-threonyl-[protein] + UDP-N-acetyl-alpha-D-galactosamine = a 3-O-[N-acetyl-alpha-D-galactosaminyl]-L-threonyl-[protein] + UDP + H(+). The protein operates within protein modification; protein glycosylation. Its function is as follows. May catalyze the initial reaction in O-linked oligosaccharide biosynthesis, the transfer of an N-acetyl-D-galactosamine residue to a serine or threonine residue on the protein receptor. The protein is Putative polypeptide N-acetylgalactosaminyltransferase 10 of Caenorhabditis briggsae.